The following is a 289-amino-acid chain: Caffeoylpyruvate hydrolase (289 aa).

Residues Glu-140, Glu-142, and Asp-171 each coordinate a divalent metal cation.

The protein belongs to the FAH family. In terms of assembly, homodimer. Mg(2+) is required as a cofactor. The cofactor is Mn(2+).

It catalyses the reaction (E)-caffeoylpyruvate + H2O = (E)-caffeate + pyruvate + H(+). Its pathway is secondary metabolite biosynthesis. Functionally, caffeoylpyruvate hydrolase; part of the gene cluster that mediates the fungal bioluminescence cycle. Involved in the recycling of oxyluciferin, a pyruvic acid adduct of caffeic acid, to caffeic acid. The fungal bioluminescence cycle begins with the hispidin synthetase that catalyzes the formation of hispidin which is further hydroxylated by the hispidin-3-hydroxylase, yielding the fungal luciferin 3-hydroxyhispidin. The luciferase then produces an endoperoxide as a high-energy intermediate with decomposition that yields oxyluciferin (also known as caffeoylpyruvate) and light emission. Oxyluciferin can be recycled to caffeic acid by caffeoylpyruvate hydrolase. This chain is Caffeoylpyruvate hydrolase, found in Neonothopanus nambi (Agaricus nambi).